A 119-amino-acid polypeptide reads, in one-letter code: Aspartate 1-decarboxylase (119 aa).

S25 functions as the Schiff-base intermediate with substrate; via pyruvic acid in the catalytic mechanism. The residue at position 25 (S25) is a Pyruvic acid (Ser). T57 is a substrate binding site. Y58 (proton donor) is an active-site residue. 73–75 (GAA) contacts substrate.

The protein belongs to the PanD family. Heterooctamer of four alpha and four beta subunits. Pyruvate serves as cofactor. Post-translationally, is synthesized initially as an inactive proenzyme, which is activated by self-cleavage at a specific serine bond to produce a beta-subunit with a hydroxyl group at its C-terminus and an alpha-subunit with a pyruvoyl group at its N-terminus.

It localises to the cytoplasm. The catalysed reaction is L-aspartate + H(+) = beta-alanine + CO2. Its pathway is cofactor biosynthesis; (R)-pantothenate biosynthesis; beta-alanine from L-aspartate: step 1/1. In terms of biological role, catalyzes the pyruvoyl-dependent decarboxylation of aspartate to produce beta-alanine. This is Aspartate 1-decarboxylase from Desulfotalea psychrophila (strain LSv54 / DSM 12343).